The sequence spans 117 residues: UPF0102 protein Rsph17025_0472 (117 aa).

This sequence belongs to the UPF0102 family.

This chain is UPF0102 protein Rsph17025_0472, found in Cereibacter sphaeroides (strain ATCC 17025 / ATH 2.4.3) (Rhodobacter sphaeroides).